Here is a 526-residue protein sequence, read N- to C-terminus: Na(+)/H(+) antiporter NhaB (526 aa).

13 helical membrane passes run 14–34 (FLGY…LINP), 35–55 (LLFY…EFIF), 99–119 (MLLV…LFVF), 122–142 (LLLR…AAAF), 146–166 (FLDA…FYGI), 206–226 (LMMH…VGEP), 239–259 (FVDF…CGIL), 307–327 (AVIG…VGLI), 328–348 (GLSV…HAIG), 357–377 (FTAL…QQLF), 397–417 (YLFN…SVYI), 451–471 (ATPN…APLI), and 479–499 (VIMA…CVEF).

It belongs to the NhaB Na(+)/H(+) (TC 2.A.34) antiporter family.

It is found in the cell inner membrane. The catalysed reaction is 2 Na(+)(in) + 3 H(+)(out) = 2 Na(+)(out) + 3 H(+)(in). Its function is as follows. Na(+)/H(+) antiporter that extrudes sodium in exchange for external protons. The chain is Na(+)/H(+) antiporter NhaB from Pectobacterium atrosepticum (strain SCRI 1043 / ATCC BAA-672) (Erwinia carotovora subsp. atroseptica).